A 188-amino-acid polypeptide reads, in one-letter code: UPF0301 protein Cag_1601 (188 aa).

This sequence belongs to the UPF0301 (AlgH) family.

The protein is UPF0301 protein Cag_1601 of Chlorobium chlorochromatii (strain CaD3).